A 399-amino-acid polypeptide reads, in one-letter code: Tryptophan synthase beta chain (399 aa).

Lysine 92 is subject to N6-(pyridoxal phosphate)lysine.

It belongs to the TrpB family. Tetramer of two alpha and two beta chains. Pyridoxal 5'-phosphate is required as a cofactor.

The enzyme catalyses (1S,2R)-1-C-(indol-3-yl)glycerol 3-phosphate + L-serine = D-glyceraldehyde 3-phosphate + L-tryptophan + H2O. It functions in the pathway amino-acid biosynthesis; L-tryptophan biosynthesis; L-tryptophan from chorismate: step 5/5. Its function is as follows. The beta subunit is responsible for the synthesis of L-tryptophan from indole and L-serine. This chain is Tryptophan synthase beta chain, found in Acidithiobacillus ferrooxidans (strain ATCC 23270 / DSM 14882 / CIP 104768 / NCIMB 8455) (Ferrobacillus ferrooxidans (strain ATCC 23270)).